Reading from the N-terminus, the 933-residue chain is Neuronal PAS domain-containing protein 4A (933 aa).

The tract at residues 1–13 (MYRSTKGASKARR) is basic motif; degenerate. Residues 1-53 (MYRSTKGASKARRDQINAEIRNLKDLLPISDADKSRLSYLHIMSLACMYTRKS) form the bHLH domain. Residues 14-53 (DQINAEIRNLKDLLPISDADKSRLSYLHIMSLACMYTRKS) form a helix-loop-helix motif region. 2 PAS domains span residues 74–148 (SFYE…PDTD) and 220–290 (TSAS…LREG). Residues 295 to 334 (AEMVVRVETADHSWVWLYMVLQLETGETPIVSNNYIISET) enclose the PAC domain. A compositionally biased stretch (polar residues) spans 361–398 (QESVSLQSPETLSSPDQVFTPGSSGLSGQSFDFSTAAC). Disordered stretches follow at residues 361–451 (QESV…ASSP), 514–573 (GSNF…LSSL), and 750–776 (DLSSSPPLSPTPSSSSHSSPPSSPSTP). 4 stretches are compositionally biased toward low complexity: residues 399-411 (STGSTEEQGGSSS), 440-451 (EPMASPSSASSP), 538-560 (GQTATVTTTTAPSLSPSAPSNPQ), and 751-769 (LSSSPPLSPTPSSSSHSSP).

Efficient DNA binding requires dimerization with another bHLH protein. Brain-specific.

The protein resides in the nucleus. Functionally, transcription factor expressed in neurons of the brain that regulates the excitatory-inhibitory balance within neural circuits and is required for contextual memory in the hippocampus. Plays a key role in the structural and functional plasticity of neurons. Acts as an early-response transcription factor in both excitatory and inhibitory neurons, where it induces distinct but overlapping sets of late-response genes in these two types of neurons, allowing the synapses that form on inhibitory and excitatory neurons to be modified by neuronal activity in a manner specific to their function within a circuit, thereby facilitating appropriate circuit responses to sensory experience. This is Neuronal PAS domain-containing protein 4A (npas4a) from Danio rerio (Zebrafish).